A 232-amino-acid chain; its full sequence is Dehydrogenase OXI1 (232 aa).

Positions 1–20 are cleaved as a signal peptide; the sequence is MTETFKVAITFVSPSSEALA. Leu-19 is an NADP(+) binding site. The N-linked (GlcNAc...) asparagine glycan is linked to Asn-28. NADP(+)-binding residues include Asp-42, Asn-70, and Lys-103. Asn-117 carries an N-linked (GlcNAc...) asparagine glycan. Residues Ser-119 and Ser-121 each act as proton donor in the active site. Residues Tyr-133, Lys-137, and Thr-168 each coordinate NADP(+). The active-site Proton acceptor is Tyr-133. The Lowers pKa of active site Tyr role is filled by Lys-137.

This sequence belongs to the short-chain dehydrogenases/reductases (SDR) family.

The enzyme catalyses a primary alcohol + NAD(+) = an aldehyde + NADH + H(+). It carries out the reaction a secondary alcohol + NAD(+) = a ketone + NADH + H(+). It participates in mycotoxin biosynthesis. Functionally, dehydrogenase; part of the Tox1A locus, one of the 2 loci that mediate the biosynthesis of T-toxin, a family of linear polyketides 37 to 45 carbons in length, of which the major component is 41 carbons, and which leads to high virulence to maize. One of the PKSs (PKS1 or PKS2) could synthesize a precursor, used subsequently by the other PKS as starter unit, to add additional carbons. Variability in the length of the final carbon backbone C35-47 could be achieved by varying the number of condensation cycles, or use of different starter or extender units or might be due to decarboxylation of the penultimate product, catalyzed by DEC1. Additional proteins are required for the biosynthesis of T-toxin, including oxidoreductases RED1, RED2, RED3, LAM1 and OXI1, as well as esterase TOX9. This is Dehydrogenase OXI1 from Cochliobolus heterostrophus (strain C4 / ATCC 48331 / race T) (Southern corn leaf blight fungus).